We begin with the raw amino-acid sequence, 602 residues long: Elongation factor 4 (602 aa).

The region spanning 6 to 188 is the tr-type G domain; the sequence is DHIRNFSIVA…AIVNKLPAPK (183 aa). GTP is bound by residues 18–23 and 135–138; these read DHGKST and NKID.

The protein belongs to the TRAFAC class translation factor GTPase superfamily. Classic translation factor GTPase family. LepA subfamily.

It localises to the cell inner membrane. The catalysed reaction is GTP + H2O = GDP + phosphate + H(+). Functionally, required for accurate and efficient protein synthesis under certain stress conditions. May act as a fidelity factor of the translation reaction, by catalyzing a one-codon backward translocation of tRNAs on improperly translocated ribosomes. Back-translocation proceeds from a post-translocation (POST) complex to a pre-translocation (PRE) complex, thus giving elongation factor G a second chance to translocate the tRNAs correctly. Binds to ribosomes in a GTP-dependent manner. The protein is Elongation factor 4 of Brucella abortus (strain 2308).